Reading from the N-terminus, the 439-residue chain is Large ribosomal subunit protein mL44 (439 aa).

Disordered regions lie at residues 39-73 (QSTA…SLPS) and 247-282 (KAME…YGNP). Positions 247-257 (KAMEEQDQDKT) are enriched in basic and acidic residues. The span at 258-274 (PDEEEAEMVANEQDQDV) shows a compositional bias: acidic residues.

This sequence belongs to the ribonuclease III family. Mitochondrion-specific ribosomal protein mL44 subfamily. Component of the mitochondrial large ribosomal subunit (mt-LSU). Mature N.crassa 74S mitochondrial ribosomes consist of a small (37S) and a large (54S) subunit. The 37S small subunit contains a 16S ribosomal RNA (16S mt-rRNA) and 32 different proteins. The 54S large subunit contains a 23S rRNA (23S mt-rRNA) and 42 different proteins. mL44 forms a heterodimer with mL57 and stabilizes rRNA expansion segments 1/2 at a membrane-facing protuberance close to the point of attachment of the ribosome to the translocon in the membrane.

The protein localises to the mitochondrion. Component of the mitochondrial ribosome (mitoribosome), a dedicated translation machinery responsible for the synthesis of mitochondrial genome-encoded proteins, including at least some of the essential transmembrane subunits of the mitochondrial respiratory chain. The mitoribosomes are attached to the mitochondrial inner membrane and translation products are cotranslationally integrated into the membrane. The protein is Large ribosomal subunit protein mL44 (mrpl3) of Neurospora crassa (strain ATCC 24698 / 74-OR23-1A / CBS 708.71 / DSM 1257 / FGSC 987).